We begin with the raw amino-acid sequence, 422 residues long: MKVVVIGAGVVGTASAWYLAKAGHEVTVVDRREGAGLETSFANGGQISPCHAEPWANPSVLPKVLKWLGREDAPLLFRWNRWDPALWAWGLRFLANCSRSRAEINTERTLRVALYSRACLGELRAETGIAYDQQVRGILHVYRDGAEFEHACRAAEVMIRHGLRRLPRTPAECTAIEPALGAVQGELAGGIYTPDDESGDAHKFTRELAALAAAKGVEFRWNVPIQSLLADGDRVAGLATSDGTIRAESYVLAAGCDSPLLARPLGLRLPIIPAKGYSVTVPVDNHAGAPLVSITDDEHKMVYSRLGDRLRAAGTAEMAGYDRMPNPVRNRLILDNARRLFPDGGDFDRAEPWAGLRPVTPDSVPLLGATPLRNLWLNTGHGTLGWTMSCGSGRIVADLVSGRPSAISMDGLGIDRFTSYLW.

3–17 (VVVIGAGVVGTASAW) lines the FAD pocket.

Belongs to the DadA oxidoreductase family. Requires FAD as cofactor.

It catalyses the reaction a D-alpha-amino acid + A + H2O = a 2-oxocarboxylate + AH2 + NH4(+). The protein operates within amino-acid degradation; D-alanine degradation; NH(3) and pyruvate from D-alanine: step 1/1. In terms of biological role, oxidative deamination of D-amino acids. The chain is D-amino acid dehydrogenase from Paramagnetospirillum magneticum (strain ATCC 700264 / AMB-1) (Magnetospirillum magneticum).